Reading from the N-terminus, the 132-residue chain is Protein NrdI (132 aa).

Belongs to the NrdI family.

Probably involved in ribonucleotide reductase function. This Staphylococcus aureus (strain Mu3 / ATCC 700698) protein is Protein NrdI.